Consider the following 184-residue polypeptide: Cysteine proteinase inhibitor 3 (184 aa).

Residues 1 to 35 (MLRRRGFCCCSGAPAAAAAALLLLAVAAAAPRAAG) form the signal peptide. In terms of domain architecture, Cystatin spans 48 to 134 (GMLAAIRREQ…KAVVEFRHVG (87 aa)). The Secondary area of contact motif lies at 90-94 (QVVTG). The interval 138 to 165 (SQSATAADDNAGQDTADPTVASRNDLHN) is disordered.

This sequence belongs to the cystatin family. Phytocystatin subfamily.

The protein resides in the secreted. In terms of biological role, specific inhibitor of cysteine proteinases. Probably involved in the regulation of endogenous processes and in defense against pests and pathogens. The sequence is that of Cysteine proteinase inhibitor 3 from Oryza sativa subsp. japonica (Rice).